The sequence spans 129 residues: 3-aminoacrylate deaminase RutC (129 aa).

This sequence belongs to the RutC family.

It catalyses the reaction (Z)-3-aminoacrylate + H2O + H(+) = 3-oxopropanoate + NH4(+). Its function is as follows. Involved in pyrimidine catabolism. Catalyzes the deamination of 3-aminoacrylate to malonic semialdehyde, a reaction that can also occur spontaneously. RutC may facilitate the reaction and modulate the metabolic fitness, rather than catalyzing essential functions. The chain is 3-aminoacrylate deaminase RutC from Yersinia enterocolitica serotype O:8 / biotype 1B (strain NCTC 13174 / 8081).